The chain runs to 397 residues: Elongation factor Tu (397 aa).

The tr-type G domain occupies 10–207 (KPHVNIGTIG…ACDSYIPEPE (198 aa)). A G1 region spans residues 19 to 26 (GHIDHGKT). 19 to 26 (GHIDHGKT) is a binding site for GTP. Position 26 (T26) interacts with Mg(2+). The interval 60–64 (GITIA) is G2. The tract at residues 81 to 84 (DCPG) is G3. Residues 81 to 85 (DCPGH) and 136 to 139 (NKCD) contribute to the GTP site. The G4 stretch occupies residues 136–139 (NKCD). Residues 174-176 (SAL) form a G5 region.

The protein belongs to the TRAFAC class translation factor GTPase superfamily. Classic translation factor GTPase family. EF-Tu/EF-1A subfamily. As to quaternary structure, monomer.

The protein localises to the cytoplasm. It carries out the reaction GTP + H2O = GDP + phosphate + H(+). GTP hydrolase that promotes the GTP-dependent binding of aminoacyl-tRNA to the A-site of ribosomes during protein biosynthesis. This chain is Elongation factor Tu, found in Oleidesulfovibrio alaskensis (strain ATCC BAA-1058 / DSM 17464 / G20) (Desulfovibrio alaskensis).